The following is a 502-amino-acid chain: Aspartyl/glutamyl-tRNA(Asn/Gln) amidotransferase subunit B (502 aa).

The protein belongs to the GatB/GatE family. GatB subfamily. In terms of assembly, heterotrimer of A, B and C subunits.

It catalyses the reaction L-glutamyl-tRNA(Gln) + L-glutamine + ATP + H2O = L-glutaminyl-tRNA(Gln) + L-glutamate + ADP + phosphate + H(+). The enzyme catalyses L-aspartyl-tRNA(Asn) + L-glutamine + ATP + H2O = L-asparaginyl-tRNA(Asn) + L-glutamate + ADP + phosphate + 2 H(+). Allows the formation of correctly charged Asn-tRNA(Asn) or Gln-tRNA(Gln) through the transamidation of misacylated Asp-tRNA(Asn) or Glu-tRNA(Gln) in organisms which lack either or both of asparaginyl-tRNA or glutaminyl-tRNA synthetases. The reaction takes place in the presence of glutamine and ATP through an activated phospho-Asp-tRNA(Asn) or phospho-Glu-tRNA(Gln). This is Aspartyl/glutamyl-tRNA(Asn/Gln) amidotransferase subunit B from Pseudarthrobacter chlorophenolicus (strain ATCC 700700 / DSM 12829 / CIP 107037 / JCM 12360 / KCTC 9906 / NCIMB 13794 / A6) (Arthrobacter chlorophenolicus).